A 3469-amino-acid chain; its full sequence is Abnormal spindle-like microcephaly-associated protein homolog (3469 aa).

Phosphoserine occurs at positions 279, 282, 366, 391, and 419. The segment at 469 to 488 (VKDISSHSHNKQPKRRPILS) is disordered. The segment covering 476–485 (SHNKQPKRRP) has biased composition (basic residues). Phosphoserine is present on Ser-599. The region spanning 911–1047 (KASKEILLAF…LLWKIVFAFQ (137 aa)) is the Calponin-homology (CH) 1 domain. Positions 1048 to 1069 (VNISLNLDQLKEEIAFLKHTKS) form a coiled coil. A Phosphoserine modification is found at Ser-1094. Positions 1101-1252 (GENIKLLMDW…YLSFLCARLL (152 aa)) constitute a Calponin-homology (CH) 2 domain. IQ domains follow at residues 1338–1369 (QNKA…IVLQ), 1384–1413 (YLWA…KLKS), 1573–1604 (LKKI…VIIQ), 1623–1652 (TRSA…SVIK), 1646–1675 (ILTS…ATIK), 1669–1700 (LKNA…LFIQ), 1719–1748 (MRES…AVIS), 1742–1773 (QRKA…IIIQ), 1792–1821 (VKKA…AAVK), 1815–1844 (QSVA…SIIK), 1865–1894 (TKAA…AAMK), 1888–1919 (EHQA…LVIQ), 1938–1969 (LRHS…VIIQ), 1961–1992 (QHKC…LLIQ), 2011–2040 (TKAA…AAIT), 2034–2065 (CNKA…IIIQ), 2084–2115 (LKKT…TFIK), 2107–2138 (MHRA…IVIQ), 2157–2188 (FLKA…TVIQ), 2180–2209 (LQIA…ITKT), 2230–2261 (LRHS…TLIQ), 2253–2284 (MHIA…IWIQ), 2302–2333 (LQNA…TFIQ), 2325–2356 (MHRA…VVIQ), 2375–2406 (QRHS…ILIQ), 2398–2429 (MHSS…IFIQ), 2448–2479 (LRKA…VLIQ), 2521–2552 (QWHS…IIIQ), 2657–2686 (HTQA…AATR), 2680–2711 (MHLA…VVIQ), 2730–2759 (VQKS…EKMA), 2806–2837 (QSRA…RIQF), 2851–2882 (QKRA…VVLQ), 2901–2930 (IRSS…STIK), 2946–2977 (KVKA…KIIQ), 3021–3050 (RHQA…AALN), 3071–3102 (LKKS…RLLH), and 3173–3202 (QNRA…GIIK).

Its subcellular location is the cytoplasm. It is found in the cytoskeleton. The protein resides in the spindle. The protein localises to the nucleus. Functionally, probable role in mitotic spindle regulation and coordination of mitotic processes. May have a preferential role in regulating neurogenesis. The chain is Abnormal spindle-like microcephaly-associated protein homolog (ASPM) from Saimiri boliviensis boliviensis (Bolivian squirrel monkey).